The following is a 149-amino-acid chain: Myosin, essential light chain (149 aa).

EF-hand domains lie at 7–42 (SMIDEMKDGFPLFDNKGDGKIDGAQLGDVLRSFGLN) and 79–114 (GSYEDFFEGLKLFDKEGTGLISGAELRHVLATLGEK).

As to quaternary structure, myosin is a hexamer of 2 heavy chains and 4 light chains (two regulatory light chains and two essential light chains).

This Branchiostoma floridae (Florida lancelet) protein is Myosin, essential light chain.